Here is a 208-residue protein sequence, read N- to C-terminus: Adenylyl-sulfate kinase (208 aa).

Residue G35–S42 coordinates ATP. S109 serves as the catalytic Phosphoserine intermediate.

It belongs to the APS kinase family.

It carries out the reaction adenosine 5'-phosphosulfate + ATP = 3'-phosphoadenylyl sulfate + ADP + H(+). It participates in sulfur metabolism; hydrogen sulfide biosynthesis; sulfite from sulfate: step 2/3. Functionally, catalyzes the synthesis of activated sulfate. The chain is Adenylyl-sulfate kinase from Geotalea uraniireducens (strain Rf4) (Geobacter uraniireducens).